Consider the following 147-residue polypeptide: Hemoglobin subunit beta (147 aa).

Residues 3–147 (EWTDKERTII…VVSALGKQYH (145 aa)) enclose the Globin domain. Residues H64 and H93 each contribute to the heme b site.

This sequence belongs to the globin family. In terms of assembly, heterotetramer of two alpha chains and two beta chains. As to expression, red blood cells.

Functionally, involved in oxygen transport from gills to the various peripheral tissues. The sequence is that of Hemoglobin subunit beta from Trematomus newnesi (Dusky notothen).